Reading from the N-terminus, the 127-residue chain is Large ribosomal subunit protein bL17 (127 aa).

This sequence belongs to the bacterial ribosomal protein bL17 family. In terms of assembly, part of the 50S ribosomal subunit. Contacts protein L32.

The chain is Large ribosomal subunit protein bL17 from Chromohalobacter salexigens (strain ATCC BAA-138 / DSM 3043 / CIP 106854 / NCIMB 13768 / 1H11).